Here is a 441-residue protein sequence, read N- to C-terminus: Cysteine desulfurase, mitosomal (441 aa).

Pyridoxal 5'-phosphate contacts are provided by residues 107-108 (AT), N189, Q217, and 237-239 (SGH). At K240 the chain carries N6-(pyridoxal phosphate)lysine. Residue T277 participates in pyridoxal 5'-phosphate binding. Residue C367 is the Cysteine persulfide intermediate of the active site. C367 serves as a coordination point for [2Fe-2S] cluster.

Belongs to the class-V pyridoxal-phosphate-dependent aminotransferase family. NifS/IscS subfamily. As to quaternary structure, interacts with ISD11. Pyridoxal 5'-phosphate is required as a cofactor.

The protein localises to the mitosome. The catalysed reaction is (sulfur carrier)-H + L-cysteine = (sulfur carrier)-SH + L-alanine. Catalyzes the removal of elemental sulfur from cysteine to produce alanine. It supplies the inorganic sulfur for iron-sulfur (Fe-S) clusters in mitosomes. The polypeptide is Cysteine desulfurase, mitosomal (Trachipleistophora hominis (Microsporidian parasite)).